The chain runs to 132 residues: Probable histone H2A.1 (132 aa).

The segment at 1–22 (MAGRGKTLGSGSAKKATTRSSK) is disordered.

The protein belongs to the histone H2A family. The nucleosome is a histone octamer containing two molecules each of H2A, H2B, H3 and H4 assembled in one H3-H4 heterotetramer and two H2A-H2B heterodimers. The octamer wraps approximately 147 bp of DNA. In terms of processing, not ubiquitinated. In terms of tissue distribution, low level of expression; mainly in roots. Found in the root cap cells and in non dividing tissues of the plant, including the root elongation and maturation zones and the leaf veins.

Its subcellular location is the nucleus. The protein localises to the chromosome. Its function is as follows. Core component of nucleosome. Nucleosomes wrap and compact DNA into chromatin, limiting DNA accessibility to the cellular machineries which require DNA as a template. Histones thereby play a central role in transcription regulation, DNA repair, DNA replication and chromosomal stability. DNA accessibility is regulated via a complex set of post-translational modifications of histones, also called histone code, and nucleosome remodeling. The sequence is that of Probable histone H2A.1 from Arabidopsis thaliana (Mouse-ear cress).